The primary structure comprises 342 residues: uncharacterized protein (342 aa).

Residues 3–173 (IAIRGGHNFL…LIGYLIAKGI (171 aa)) form the MurNAc-LAA domain.

To C.perfringens CPE1502.

This is an uncharacterized protein from Clostridium perfringens.